A 706-amino-acid polypeptide reads, in one-letter code: MFNKYVKTFQYGNQTVTLETGEIARQAAAAVKVSMGDTVVFVAVTTNKEVKEGQDFFPLAVDYLERTYAAGKIPGGFFKREGKQSEKEILTSRLIDRPIRPLFPEGFYHDIQIVAMVVSVDPEIDSDIPAMLGASAALVLSGVPFAGPIGAARVGYINGVYVLNPTKAELAKSQLDLVVAGTSKAVLMVESEAKILPEDVMLGAVVYGHDQMQVAINAINEFADEVNPEVWDWKAPETNEELVAKVRGIAGETIKEAFKIRQKQARSAKLDEAWNAVKEALITEETDTLAANEIKGIFKRLEADVVRSQILDGQPRIDGRDTRTVRPLNIQTGVLPRTHGSALFTRGETQALAVATLGTSRDEQIIDALSGEYTDRFMLHYNFPPYSTGEVGRMGAPKRREIGHGRLAKRALLAVLPKPEDFSYTMRVVSEITESNGSSSMASVCGGCLSLLSAGVPLKAHVAGIAMGLILEGNKFAVLTDILGDEDHLGDMDFKVAGTTEGVTALQMDIKIQGITKEIMQIALAQAKEARLHILDQMKAAVAGPQELSAHAPRLFTMKISQDKIRDVIGKGGETIRSITAETGTEINIAEDGTITIAATTQEAGDAAKKRIEEITAEVEVGKVYEGTVVKILDNNVGAIVSVMPGKDGLVHISQIAHERVRNVGDYLQVGQVVNVKALEVDDRGRVRLSIKALLDAPVREENAAE.

The Mg(2+) site is built by Asp-487 and Asp-493. The 60-residue stretch at 553–612 (PRLFTMKISQDKIRDVIGKGGETIRSITAETGTEINIAEDGTITIAATTQEAGDAAKKRI) folds into the KH domain. In terms of domain architecture, S1 motif spans 622-692 (GKVYEGTVVK…DRGRVRLSIK (71 aa)).

This sequence belongs to the polyribonucleotide nucleotidyltransferase family. Mg(2+) serves as cofactor.

The protein resides in the cytoplasm. It catalyses the reaction RNA(n+1) + phosphate = RNA(n) + a ribonucleoside 5'-diphosphate. Functionally, involved in mRNA degradation. Catalyzes the phosphorolysis of single-stranded polyribonucleotides processively in the 3'- to 5'-direction. The chain is Polyribonucleotide nucleotidyltransferase from Neisseria gonorrhoeae (strain ATCC 700825 / FA 1090).